Consider the following 455-residue polypeptide: Bifunctional protein GlmU (455 aa).

Positions 1 to 230 are pyrophosphorylase; the sequence is MTKRNAIILA…FDESMGVNDR (230 aa). UDP-N-acetyl-alpha-D-glucosamine-binding positions include 9–12, K23, Q73, 78–79, 101–103, G140, E155, N170, and N228; these read LAAG, GT, and SGD. D103 is a binding site for Mg(2+). N228 provides a ligand contact to Mg(2+). Residues 231 to 251 form a linker region; sequence VALARANKVMRNRINTHWMRE. Residues 252–455 form an N-acetyltransferase region; sequence GVSMIDPETT…KENYAKKLPW (204 aa). Residues R333 and K351 each coordinate UDP-N-acetyl-alpha-D-glucosamine. H363 (proton acceptor) is an active-site residue. 2 residues coordinate UDP-N-acetyl-alpha-D-glucosamine: Y366 and N377. Acetyl-CoA is bound by residues 386–387, S405, A423, and R440; that span reads NY.

In the N-terminal section; belongs to the N-acetylglucosamine-1-phosphate uridyltransferase family. The protein in the C-terminal section; belongs to the transferase hexapeptide repeat family. In terms of assembly, homotrimer. Requires Mg(2+) as cofactor.

The protein resides in the cytoplasm. The catalysed reaction is alpha-D-glucosamine 1-phosphate + acetyl-CoA = N-acetyl-alpha-D-glucosamine 1-phosphate + CoA + H(+). It carries out the reaction N-acetyl-alpha-D-glucosamine 1-phosphate + UTP + H(+) = UDP-N-acetyl-alpha-D-glucosamine + diphosphate. It participates in nucleotide-sugar biosynthesis; UDP-N-acetyl-alpha-D-glucosamine biosynthesis; N-acetyl-alpha-D-glucosamine 1-phosphate from alpha-D-glucosamine 6-phosphate (route II): step 2/2. It functions in the pathway nucleotide-sugar biosynthesis; UDP-N-acetyl-alpha-D-glucosamine biosynthesis; UDP-N-acetyl-alpha-D-glucosamine from N-acetyl-alpha-D-glucosamine 1-phosphate: step 1/1. The protein operates within bacterial outer membrane biogenesis; LPS lipid A biosynthesis. Its function is as follows. Catalyzes the last two sequential reactions in the de novo biosynthetic pathway for UDP-N-acetylglucosamine (UDP-GlcNAc). The C-terminal domain catalyzes the transfer of acetyl group from acetyl coenzyme A to glucosamine-1-phosphate (GlcN-1-P) to produce N-acetylglucosamine-1-phosphate (GlcNAc-1-P), which is converted into UDP-GlcNAc by the transfer of uridine 5-monophosphate (from uridine 5-triphosphate), a reaction catalyzed by the N-terminal domain. The polypeptide is Bifunctional protein GlmU (Limosilactobacillus reuteri (strain DSM 20016) (Lactobacillus reuteri)).